Reading from the N-terminus, the 181-residue chain is Sodium/potassium-transporting ATPase subunit beta-1-interacting protein 3 (181 aa).

Transmembrane regions (helical) follow at residues 5-22 (TGRC…LVAL), 35-55 (APIL…FGTI), 62-82 (IVAY…IICF), and 151-171 (AVQI…ISVI).

It belongs to the NKAIN family. In terms of assembly, interacts with atp1b1 C-terminus.

The protein localises to the cell membrane. This is Sodium/potassium-transporting ATPase subunit beta-1-interacting protein 3 (nkain3) from Xenopus tropicalis (Western clawed frog).